The primary structure comprises 418 residues: Staphyloferrin B transporter (418 aa).

10 helical membrane passes run 19–39, 49–69, 88–108, 163–183, 222–242, 257–277, 287–307, 317–337, 353–373, and 377–397; these read FIAI…MASL, LWSG…SPIW, GLAV…FVLV, ILGF…VCIF, FIIV…ALSP, VIGF…PLWG, SVYI…GLAT, ILQG…VVNA, MLVV…SYTT, and TFIV…CSTI.

This sequence belongs to the major facilitator superfamily.

It is found in the cell membrane. In terms of biological role, involved in staphyloferrin B secretion. The chain is Staphyloferrin B transporter from Staphylococcus aureus (strain NCTC 8325 / PS 47).